Reading from the N-terminus, the 376-residue chain is Chlorophyll synthase, chloroplastic (376 aa).

A chloroplast-targeting transit peptide spans 1–47 (MATSHLLAAASSTAASSATFRPPLLSLRSPPPSSLRLNRRRHFQVVR). The disordered stretch occupies residues 48–69 (AAETDKETKANAPEKAPAGGSS). 8 helical membrane-spanning segments follow: residues 95–115 (PVTW…SGNF), 171–191 (VITQ…LLDV), 197–217 (FPII…YSAP), 230–250 (FALG…LFGT), 255–275 (IVVL…VNDF), 300–320 (WICV…LFSS), 325–345 (YALA…QYFL), and 355–375 (YQAS…LATS).

It belongs to the UbiA prenyltransferase family. Chlorophyll synthase subfamily.

Its subcellular location is the plastid. It localises to the chloroplast membrane. It catalyses the reaction phytyl diphosphate + chlorophyllide a + H(+) = chlorophyll a + diphosphate. Its function is as follows. Involved in one of the last steps of the biosynthesis of chlorophyll a. This chain is Chlorophyll synthase, chloroplastic (CHLG), found in Oryza sativa subsp. japonica (Rice).